Here is a 2715-residue protein sequence, read N- to C-terminus: Teneurin-3 (2715 aa).

Disordered stretches follow at residues Met-1–Gln-38 and Gly-142–Pro-223. A Teneurin N-terminal domain is found at Met-1–Cys-309. Residues Met-1–Thr-310 are Cytoplasmic-facing. Residues Gly-142–Ser-153 show a composition bias toward low complexity. Over residues Asp-159–Ser-168 the composition is skewed to basic and acidic residues. Polar residues predominate over residues Glu-171–Leu-182. The segment covering Thr-201–Asn-213 has biased composition (low complexity). A helical membrane pass occupies residues Ala-311 to Met-331. Residues His-332–Arg-2715 lie on the Extracellular side of the membrane. 3 N-linked (GlcNAc...) asparagine glycosylation sites follow: Asn-345, Asn-380, and Asn-419. EGF-like domains lie at Ser-514–Ser-545, Arg-546–Asp-576, Pro-578–Glu-610, Glu-611–Glu-642, Leu-644–Ser-677, Asn-678–Gln-709, Arg-710–Thr-739, and Ile-740–Asp-783. Cystine bridges form between Cys-518/Cys-528, Cys-522/Cys-533, Cys-535/Cys-544, Cys-553/Cys-564, Cys-566/Cys-575, Cys-582/Cys-593, Cys-587/Cys-598, Cys-600/Cys-609, Cys-614/Cys-625, Cys-619/Cys-630, Cys-632/Cys-641, Cys-652/Cys-665, Cys-667/Cys-676, Cys-681/Cys-691, Cys-685/Cys-696, Cys-698/Cys-707, Cys-712/Cys-722, Cys-716/Cys-727, Cys-729/Cys-738, Cys-752/Cys-762, Cys-756/Cys-771, and Cys-773/Cys-782. N-linked (GlcNAc...) asparagine glycosylation occurs at Asn-670. N-linked (GlcNAc...) asparagine glycans are attached at residues Asn-869 and Asn-892. Residues Leu-1181–Ser-1209 form an NHL 1 repeat. The N-linked (GlcNAc...) asparagine glycan is linked to Asn-1211. NHL repeat units lie at residues Leu-1216–Leu-1260, Ala-1286–Ile-1330, Cys-1347–Asn-1387, Leu-1418–Ile-1445, and Cys-1474–Asn-1517. The stretch at Tyr-1527–His-1546 is one YD 1 repeat. N-linked (GlcNAc...) asparagine glycosylation is found at Asn-1543 and Asn-1560. YD repeat units lie at residues Tyr-1563–Arg-1583, Tyr-1626–Phe-1645, and Phe-1646–His-1668. Residues Asn-1656, Asn-1693, Asn-1751, and Asn-1836 are each glycosylated (N-linked (GlcNAc...) asparagine). YD repeat units follow at residues Tyr-1839–Asp-1858, Tyr-1880–Glu-1898, Tyr-1899–Gln-1919, Tyr-1926–Asp-1943, Tyr-1944–Lys-1965, Tyr-1966–Ser-1983, Tyr-1986–Thr-2006, Tyr-2009–Val-2029, Tyr-2037–Pro-2056, Phe-2062–Tyr-2079, Tyr-2080–Ile-2106, Tyr-2108–Gln-2121, Tyr-2122–Ala-2145, Tyr-2148–Asn-2168, Tyr-2169–Leu-2189, Tyr-2191–Gly-2211, Tyr-2223–Tyr-2243, and Tyr-2245–Phe-2265. Asn-1937 carries an N-linked (GlcNAc...) asparagine glycan. Asn-2140 is a glycosylation site (N-linked (GlcNAc...) asparagine). An N-linked (GlcNAc...) asparagine glycan is attached at Asn-2280. The stretch at Tyr-2291–Thr-2332 is one YD 23 repeat. A glycan (N-linked (GlcNAc...) asparagine) is linked at Asn-2592.

It belongs to the tenascin family. Teneurin subfamily. As to quaternary structure, homodimer; disulfide-linked; to mediate homophilic cell adhesion. Most isoforms (isoform-type A and type-B) can mediate homophilic interaction. Heterodimer with either TENM1 or TENM2. May also form heterodimer with TENM4. Isoform A0B0: Does not form homodimer to mediate homophilic cell adhesion. Isoform A0B0: Heterodimer with ADGRL3. In terms of tissue distribution, in brain, expressed in highly specific regions of the postnatal brain: expressed in restricted domains of the developing hippocampal region, including proximal CA1, distal subiculum, and medial entorhinal cortex (at protein level). Expression matches with topographic connectivity between entorhinal cortex, CA1, and subiculum (at protein level). Also specifically expressed in subregions of the presubiculum, parasubiculum, medial mammillary nucleus and anteroventral thalamic nucleus that are topographically connected with subiculum or entorhinal cortex (at protein level). Expressed in neurons of the developing visual pathway (at protein level). Expressed in the dorsal and ventral lateral geniculate nucleus (dLGN and vLGN) and optic tract at birth. Expressed in ipsilateral retinal axons of terminal zones (TZs) in the developing superior colliculus (SC) throughout the first postnatal week. Expressed in the layer V of the visual caudal cortex. Expressed in the femoral and mandibular condylar cartilages. Strongly expressed in fibrous and proliferating chondrocytes. Poorly expressed in mature chondrocytes. Not expressed in hypertrophic chondrocytes.

Its subcellular location is the cell membrane. It is found in the cell projection. The protein resides in the axon. In terms of biological role, involved in neural development by regulating the establishment of proper connectivity within the nervous system. Acts in both pre- and postsynaptic neurons in the hippocampus to control the assembly of a precise topographic projection: required in both CA1 and subicular neurons for the precise targeting of proximal CA1 axons to distal subiculum, probably by promoting homophilic cell adhesion. Promotes homophilic adhesion in a splicing isoform-dependent manner: most isoforms (isoform-type A and type-B) can mediate homophilic interaction. Promotes axon guidance. Required for proper dendrite morphogenesis and axon targeting in the vertebrate visual system, thereby playing a key role in the development of the visual pathway. Regulates the formation in ipsilateral retinal mapping to both the dorsal lateral geniculate nucleus (dLGN) and the superior colliculus (SC). May also be involved in the differentiation of the fibroblast-like cells in the superficial layer of mandibular condylar cartilage into chondrocytes. The sequence is that of Teneurin-3 from Mus musculus (Mouse).